We begin with the raw amino-acid sequence, 261 residues long: Gap junction beta-6 protein (261 aa).

At 1–22 (MDWGTLHTFVGGVNKHSTSIGK) the chain is on the cytoplasmic side. Residues 23–45 (VWVTVLFVFRVMILVVAAQEVWG) form a helical membrane-spanning segment. At 46–75 (DEQEDFVCNTLQPGCRNVCYDHFFPVSHIR) the chain is on the extracellular side. Residues 76 to 98 (LWALQLIFVSTPALLVAMHVAYY) traverse the membrane as a helical segment. The Cytoplasmic portion of the chain corresponds to 99-131 (RHEAARRFRRGETRSEFKDLEDIKRQKVRIEGS). The chain crosses the membrane as a helical span at residues 132-154 (LWWTYTSSIFFRIVFEAAFMYVF). The Extracellular segment spans residues 155 to 192 (YFLYNGYHLPWVLKCGIQPCPNLVDCFISRPTEKTVFT). The chain crosses the membrane as a helical span at residues 193 to 215 (IFMISASVICMLLNVAELCYLLL). The Cytoplasmic segment spans residues 216–261 (KVCFRRSKRAQTQKAPPNHALKESKQNEMNELISEGGQNAITGFPS).

This sequence belongs to the connexin family. Beta-type (group I) subfamily. A connexon is composed of a hexamer of connexins. Interacts with CNST.

The protein resides in the cell membrane. Its subcellular location is the cell junction. It is found in the gap junction. One gap junction consists of a cluster of closely packed pairs of transmembrane channels, the connexons, through which materials of low MW diffuse from one cell to a neighboring cell. The sequence is that of Gap junction beta-6 protein (GJB6) from Bos taurus (Bovine).